Reading from the N-terminus, the 132-residue chain is Small ribosomal subunit protein uS11 (132 aa).

Belongs to the universal ribosomal protein uS11 family. Part of the 30S ribosomal subunit. Interacts with proteins S7 and S18. Binds to IF-3.

Located on the platform of the 30S subunit, it bridges several disparate RNA helices of the 16S rRNA. Forms part of the Shine-Dalgarno cleft in the 70S ribosome. The sequence is that of Small ribosomal subunit protein uS11 from Legionella pneumophila (strain Paris).